Here is a 205-residue protein sequence, read N- to C-terminus: Large ribosomal subunit protein uL13 (205 aa).

The protein belongs to the universal ribosomal protein uL13 family.

The chain is Large ribosomal subunit protein uL13 (RPL13A) from Lupinus luteus (European yellow lupine).